Here is a 622-residue protein sequence, read N- to C-terminus: 1-deoxy-D-xylulose-5-phosphate synthase (622 aa).

Residues histidine 80 and 121-123 (GHS) each bind thiamine diphosphate. Aspartate 152 contributes to the Mg(2+) binding site. Thiamine diphosphate contacts are provided by residues 153 to 154 (GA), asparagine 181, tyrosine 288, and glutamate 370. Asparagine 181 contacts Mg(2+).

It belongs to the transketolase family. DXPS subfamily. In terms of assembly, homodimer. Mg(2+) is required as a cofactor. The cofactor is thiamine diphosphate.

It catalyses the reaction D-glyceraldehyde 3-phosphate + pyruvate + H(+) = 1-deoxy-D-xylulose 5-phosphate + CO2. It functions in the pathway metabolic intermediate biosynthesis; 1-deoxy-D-xylulose 5-phosphate biosynthesis; 1-deoxy-D-xylulose 5-phosphate from D-glyceraldehyde 3-phosphate and pyruvate: step 1/1. Its function is as follows. Catalyzes the acyloin condensation reaction between C atoms 2 and 3 of pyruvate and glyceraldehyde 3-phosphate to yield 1-deoxy-D-xylulose-5-phosphate (DXP). The chain is 1-deoxy-D-xylulose-5-phosphate synthase from Shewanella putrefaciens (strain CN-32 / ATCC BAA-453).